Here is a 381-residue protein sequence, read N- to C-terminus: tRNA pseudouridine synthase Pus10 (381 aa).

Catalysis depends on D226, which acts as the Nucleophile.

This sequence belongs to the pseudouridine synthase Pus10 family.

It catalyses the reaction uridine(54) in tRNA = pseudouridine(54) in tRNA. The catalysed reaction is uridine(55) in tRNA = pseudouridine(55) in tRNA. Its function is as follows. Responsible for synthesis of pseudouridine from uracil-54 and uracil-55 in the psi GC loop of transfer RNAs. In Nitrosopumilus maritimus (strain SCM1), this protein is tRNA pseudouridine synthase Pus10.